A 1350-amino-acid polypeptide reads, in one-letter code: ABC-type transporter MDR1 (1350 aa).

Basic and acidic residues predominate over residues 1-11 (MDTVHEGHHGS). Residues 1–84 (MDTVHEGHHG…DEGEDPFAHL (84 aa)) form a disordered region. The span at 22-33 (VEVTNYEKTQLG) shows a compositional bias: polar residues. The span at 52-63 (KKHKSQKEKKHK) shows a compositional bias: basic residues. Residues 121-411 (VLSALSSIIG…VAPNIQAFTT (291 aa)) enclose the ABC transmembrane type-1 1 domain. The next 6 membrane-spanning stretches (helical) occupy residues 124–144 (ALSSIIGGALLPLMTIVFGGL), 170–190 (LYFLYLAIGEFVFVYIATAGF), 243–263 (KVGLTLTALATFITAFVVSFI), 271–291 (ILMSTVFAIVFTMGGMSGFIV), 350–370 (GSMIGFLMCYVYLNYSLAFWM), and 380–400 (IEVGDVLTIILSIMIGAFALG). In terms of domain architecture, ABC transporter 1 spans 446-691 (IELRNIRHIY…QGAYYNLVEA (246 aa)). Position 481–488 (481–488 (GESGSGKS)) interacts with ATP. A compositionally biased stretch (basic and acidic residues) spans 712–731 (KDQNLKHETTKGEQPEDGLK). Residues 712 to 734 (KDQNLKHETTKGEQPEDGLKLAR) are disordered. Transmembrane regions (helical) follow at residues 779 to 799 (IGIICSVITGGGNPTQAVFFA), 830 to 850 (FMLALVQFSAFLIQGYVFAVC), 903 to 923 (LGTILSVIVTLVAAFSVSLAI), 929 to 949 (LVCISTVPILLACGFLRFWML), 1014 to 1034 (ASQSLIFCCTALGFWYGGTLI), and 1044 to 1064 (FFLCFSAVIFGAQSAGTIFSF). In terms of domain architecture, ABC transmembrane type-1 2 spans 779 to 1070 (IGIICSVITG…IFSFAPDMGK (292 aa)). The ABC transporter 2 domain occupies 1105-1343 (IEFRDVHFRY…RGRYWELVNL (239 aa)). Asn1127 carries N-linked (GlcNAc...) asparagine glycosylation. 1140-1147 (GASGCGKS) lines the ATP pocket.

It belongs to the ABC transporter superfamily. ABCB family. Multidrug resistance exporter (TC 3.A.1.201) subfamily.

Its subcellular location is the cell membrane. ABC-type transporter that is involved in the secretion of liamocins, glycolipids (also called heavy oils) composed of a single mannitol or arabitol headgroup linked to either three, four or even six 3,5-dihydroxydecanoic ester tail-groups. The chain is ABC-type transporter MDR1 from Aureobasidium melanogenum (Aureobasidium pullulans var. melanogenum).